A 598-amino-acid chain; its full sequence is Polypeptide N-acetylgalactosaminyltransferase 17 (598 aa).

At 1–6 (MASLRR) the chain is on the cytoplasmic side. A helical; Signal-anchor for type II membrane protein membrane pass occupies residues 7–27 (VKVLLVLNLIAVAGFVLFLAK). At 28 to 598 (CRPIAVRSGD…QRWTIKNSIK (571 aa)) the chain is on the lumenal side. Asparagine 50 carries N-linked (GlcNAc...) asparagine glycosylation. Cystine bridges form between cysteine 142–cysteine 373 and cysteine 364–cysteine 443. The catalytic subdomain A stretch occupies residues 151 to 262 (LPQISIIFIF…AGWAEPVLSR (112 aa)). Substrate-binding residues include aspartate 192 and arginine 223. Mn(2+) contacts are provided by aspartate 246, histidine 248, and histidine 378. A catalytic subdomain B region spans residues 319-381 (PIRTPAMIGC…PCSRVAHIER (63 aa)). Arginine 381 and tyrosine 386 together coordinate substrate. 2 N-linked (GlcNAc...) asparagine glycosylation sites follow: asparagine 461 and asparagine 486. Residues 465–594 (AYGELRNNKA…SCTGQRWTIK (130 aa)) form the Ricin B-type lectin domain. 3 disulfides stabilise this stretch: cysteine 478-cysteine 494, cysteine 526-cysteine 541, and cysteine 568-cysteine 586.

Belongs to the glycosyltransferase 2 family. GalNAc-T subfamily. Mn(2+) is required as a cofactor. Highly expressed in brain and heart. Weakly expressed in kidney, liver, lung and spleen.

It localises to the golgi apparatus membrane. It carries out the reaction L-seryl-[protein] + UDP-N-acetyl-alpha-D-galactosamine = a 3-O-[N-acetyl-alpha-D-galactosaminyl]-L-seryl-[protein] + UDP + H(+). The enzyme catalyses L-threonyl-[protein] + UDP-N-acetyl-alpha-D-galactosamine = a 3-O-[N-acetyl-alpha-D-galactosaminyl]-L-threonyl-[protein] + UDP + H(+). It participates in protein modification; protein glycosylation. In terms of biological role, may catalyze the initial reaction in O-linked oligosaccharide biosynthesis, the transfer of an N-acetyl-D-galactosamine residue to a serine or threonine residue on the protein receptor. The protein is Polypeptide N-acetylgalactosaminyltransferase 17 of Homo sapiens (Human).